The chain runs to 195 residues: GTP cyclohydrolase-2 (195 aa).

Residue 48–52 (RIHSE) coordinates GTP. The Zn(2+) site is built by Cys53, Cys64, and Cys66. GTP contacts are provided by residues Gln69, 90-92 (EGR), and Thr112. The active-site Proton acceptor is Asp124. Arg126 serves as the catalytic Nucleophile. Residues Thr147 and Lys152 each coordinate GTP.

The protein belongs to the GTP cyclohydrolase II family. Zn(2+) serves as cofactor.

It catalyses the reaction GTP + 4 H2O = 2,5-diamino-6-hydroxy-4-(5-phosphoribosylamino)-pyrimidine + formate + 2 phosphate + 3 H(+). It participates in cofactor biosynthesis; riboflavin biosynthesis; 5-amino-6-(D-ribitylamino)uracil from GTP: step 1/4. In terms of biological role, catalyzes the conversion of GTP to 2,5-diamino-6-ribosylamino-4(3H)-pyrimidinone 5'-phosphate (DARP), formate and pyrophosphate. The polypeptide is GTP cyclohydrolase-2 (Campylobacter fetus subsp. fetus (strain 82-40)).